A 422-amino-acid chain; its full sequence is Validoxylamine A glucosyltransferase (422 aa).

Belongs to the glycosyltransferase 2 family. Requires Mn(2+) as cofactor.

The catalysed reaction is validoxylamine A + UDP-alpha-D-glucose = validamycin A + UDP + H(+). Involved in the biosynthesis of the antifungal agent validamycin A. Catalyzes the final attachment of glucose from UDP-alpha-D-glucose to validoxylamine A to yield validamycin A. UDP-glucose is the most efficient glycosyl donor, whereas GDP-glucose and ADP-glucose are much less efficient. ValG also utilizes UDP-galactose as substrate to produce the new validamycin analog, 4''-epi-validamycin A. In Streptomyces hygroscopicus subsp. jinggangensis (strain 5008), this protein is Validoxylamine A glucosyltransferase.